The chain runs to 258 residues: Ribosome maturation factor RimP (258 aa).

Disordered stretches follow at residues 48–88 and 212–258; these read PQRP…PTSA and IFKK…AEND. Basic residues predominate over residues 215-224; the sequence is KPQKPGKKPG.

It belongs to the RimP family.

Its subcellular location is the cytoplasm. Its function is as follows. Required for maturation of 30S ribosomal subunits. The sequence is that of Ribosome maturation factor RimP from Desulfovibrio desulfuricans (strain ATCC 27774 / DSM 6949 / MB).